The chain runs to 598 residues: DNA primase (598 aa).

The CHC2-type zinc-finger motif lies at 38-62 (CPFHDEKTPSFTVSEDKQICHCFGC). Residues 260–341 (DEIILLEGFM…NVYVVQLPSG (82 aa)) enclose the Toprim domain. 3 residues coordinate Mg(2+): E266, D310, and D312.

This sequence belongs to the DnaG primase family. In terms of assembly, monomer. Interacts with DnaB. Requires Zn(2+) as cofactor. The cofactor is Mg(2+).

It carries out the reaction ssDNA + n NTP = ssDNA/pppN(pN)n-1 hybrid + (n-1) diphosphate.. In terms of biological role, RNA polymerase that catalyzes the synthesis of short RNA molecules used as primers for DNA polymerase during DNA replication. The polypeptide is DNA primase (Staphylococcus epidermidis (strain ATCC 12228 / FDA PCI 1200)).